We begin with the raw amino-acid sequence, 354 residues long: MTCRRITFVPNFMIRDARVLRAGFVPREVEHRDAEVNHLSSVLEPITNGEPADTAIVTGPSGTGKTCISQFVTERLREEVLNVEATYVNCWRNYTRFRTLYQILDDFGETIDIHRQSTPHDELIDRLQQYDGPRTVIILDEVDQLEDPGIIYDLHSLPHFAVICIANKEEDLFSRVDDRLVSRLRSSEHVRMDKYHDEQLHDILAARVKGGLDQDVITTNQLDRIADAAAGDARLAIGILRTAASKADRESRERITDDILLNAAEDARAQIKQKNLDSLIPHQRLVYDVVREHGPLGPSEIYDHYKRKVDDPRTKRTIRTYLSKMTQYNVLEAEGTSRDREYSLVDSTAPSVTQ.

ATP is bound by residues 63–67, tyrosine 195, and arginine 207; that span reads TGKTC.

It belongs to the CDC6/cdc18 family.

Involved in regulation of DNA replication. This is ORC1-type DNA replication protein 9 (orc9-1) from Halobacterium salinarum (strain ATCC 700922 / JCM 11081 / NRC-1) (Halobacterium halobium).